Consider the following 574-residue polypeptide: Craniofacial development protein 2 (574 aa).

Composition is skewed to basic and acidic residues over residues 1–16, 23–37, 45–55, 86–111, and 134–172; these read MEEV…KAED, ECHE…KEDE, EQTKGIKRKAE, SEKE…KEDE, and TGEE…DRQQ. Disordered stretches follow at residues 1–222 and 488–574; these read MEEV…PAVD and TRPF…SGVF. Over residues 199–208 the composition is skewed to polar residues; it reads KTGTNASSKN. The tract at residues 493 to 572 is hydrophilic; that stretch reads GTNEADDTSE…AVPSLPAGSG (80 aa). A compositionally biased stretch (basic and acidic residues) spans 502–516; that stretch reads EESKPSSEQKGKEKP. The span at 518-528 shows a compositional bias: low complexity; that stretch reads ASVPSAVSSVP.

The protein localises to the cytoplasm. Its subcellular location is the nucleus. The sequence is that of Craniofacial development protein 2 (CFDP2) from Tragulus javanicus (Lesser Malay chevrotain).